The following is an 800-amino-acid chain: Probable replication endonuclease from prophage-like region (800 aa).

Catalysis depends on O-(5'-phospho-DNA)-tyrosine intermediate residues Y503 and Y507.

It belongs to the phage GPA family.

Possible endonuclease which induces a single-strand cut and initiates DNA replication. The chain is Probable replication endonuclease from prophage-like region from Salmonella paratyphi A (strain ATCC 9150 / SARB42).